Reading from the N-terminus, the 422-residue chain is Glucose-1-phosphate adenylyltransferase 2 (422 aa).

Residues Y110, G175, 190-191 (EK), and S208 each bind alpha-D-glucose 1-phosphate.

It belongs to the bacterial/plant glucose-1-phosphate adenylyltransferase family. Homotetramer.

The catalysed reaction is alpha-D-glucose 1-phosphate + ATP + H(+) = ADP-alpha-D-glucose + diphosphate. It participates in glycan biosynthesis; glycogen biosynthesis. Involved in the biosynthesis of ADP-glucose, a building block required for the elongation reactions to produce glycogen. Catalyzes the reaction between ATP and alpha-D-glucose 1-phosphate (G1P) to produce pyrophosphate and ADP-Glc. In Alkalilimnicola ehrlichii (strain ATCC BAA-1101 / DSM 17681 / MLHE-1), this protein is Glucose-1-phosphate adenylyltransferase 2.